Here is a 45-residue protein sequence, read N- to C-terminus: Large ribosomal subunit protein bL34 (45 aa).

The protein belongs to the bacterial ribosomal protein bL34 family.

This chain is Large ribosomal subunit protein bL34, found in Salinispora arenicola (strain CNS-205).